Consider the following 184-residue polypeptide: Luciferin-binding protein (184 aa).

4 EF-hand domains span residues 10–45, 46–81, 98–133, and 134–169; these read YHLR…IAKI, AKLS…EEAA, MAVI…VGPD, and ITDD…FLFG. Ca(2+) is bound by residues Asp111, Asp113, Asp115, Tyr117, Glu122, Asp147, Asn149, Asn151, Gln153, and Glu158.

Functionally, this Ca(2+)-dependent protein binds to luciferin. The luciferin of LBP is capable of reacting with luciferase and O(2) only when calcium is bound. The sequence is that of Luciferin-binding protein from Renilla reniformis (Sea pansy).